A 619-amino-acid chain; its full sequence is TOX high mobility group box family member 4 (619 aa).

Disordered regions lie at residues 155–227, 304–335, and 436–458; these read LSLG…QKPV, ELDP…TESP, and LPPP…QQQV. T176 carries the phosphothreonine modification. Residues S178 and S182 each carry the phosphoserine modification. Over residues 183–193 the composition is skewed to basic and acidic residues; it reads LHEDGVDDFRR. A compositionally biased stretch (basic residues) spans 208–218; that stretch reads KQKAPKKRKKK. A Nuclear localization signal motif is present at residues 213 to 218; the sequence is KKRKKK. A DNA-binding region (HMG box) is located at residues 223-291; it reads PQKPVSAYAL…EYLKALAAYK (69 aa). T313 carries the phosphothreonine modification. S315 is modified (phosphoserine). The segment covering 320–335 has biased composition (low complexity); that stretch reads TTADPASPAPASTESP. A compositionally biased stretch (pro residues) spans 436 to 453; the sequence is LPPPRLQPPPLQQMPQPP. The residue at position 479 (R479) is an Asymmetric dimethylarginine. A phosphoserine mark is found at S531, S548, S550, S558, S560, and S565.

Component of the PNUTS-PP1 phosphatase complex, composed of PPP1R10/PNUTS, TOX4, WDR82 and PPP1CA or PPP1CB or PPP1CC. Interacts with PPP1R10/PNUTS. Interacts with FOXO1 and CREB1 (increased by cAMP); FOXO1 and CREB1 are required for full induction of TOX4-dependent activity and the interactions are inhibited by insulin.

The protein resides in the nucleus. The protein localises to the chromosome. With respect to regulation, in liver, recruited to target gene promoters following treatment with dexamethasone and cAMP. Binding is decreased in presence of insulin. Its function is as follows. Transcription factor that modulates cell fate reprogramming from the somatic state to the pluripotent and neuronal fate. In liver, controls the expression of hormone-regulated gluconeogenic genes such as G6PC1 and PCK1. This regulation is independent of the insulin receptor activation. Also acts as a regulatory component of protein phosphatase 1 (PP1) complexes. Component of the PNUTS-PP1 protein phosphatase complex, a PP1 complex that regulates RNA polymerase II transcription pause-release. PNUTS-PP1 also plays a role in the control of chromatin structure and cell cycle progression during the transition from mitosis into interphase. The polypeptide is TOX high mobility group box family member 4 (Tox4) (Rattus norvegicus (Rat)).